The sequence spans 834 residues: MGPRARTVCFLFFLLWVLAELAENSDFHLPGDYLLGGLFTLHANMKGIVHLNFLQVPMCKEYEMKVSGYNLMQAMRFAVEEINNDSSLLPDVLLGYEMVDVCYISNNVQPALYFLAQEDNLLPIQEDYSNYVPRVVAVIGPENSESVMTVAHFLSLFLLPQITYSAISDQLQDKQRFPALLRTTPSAKHHIEAMVQLMLHFHWNWISVLVSSDTYGRDNGQMLGDRLAGGDICIAFQETLPTLQSNQDIMPEDHQRLVSIVEKLQQSTARVVVVFSPDLSLYNFFREVLRQNFTGAVWIASESWAIDPVLHNLTGLHRTGTFLGITIQNVPIPGFSEFRVRGPQAGPTNQRSTCNQECDTCLNSTLSFNTVLRLSGERIVYSVYSAVYAVAHALHSLLGCDHSTCTKRVVYPWQLVQEIWKVNFTLLDHQIFFDPQGDVALHLEIVQWQWDLSQNPFQSIASYNPLQGRLKHIQDISWHTINNTIPVSMCSKRCQSGQKKKPVGIHTCCFECIDCLPGTFLNQTEDEYDCQACPSNEWSHQSETSCFKRRLSFLEWHEAATIAVALLAALGFLXXXXXXXXXXXXXXXPMVRSAGGPMCFLMLTLLLVAYMVVPVYVGPPKVTTCLCRQALFPVCFTICISCITMRSFQIVCVFKMASRFPRAYSYWVRYQGSYVSVAFITALKVVTVVISLLATGLNPTTRADTDDPKIMIISCNPNYRNSLLFNTSLDLLLSVVGFSFAYMGKELPTNYNEAKFITFSMTFYFTSSVSLCTFMSVYDGVLVTIVDLLVTVFNLLAISLGYFGPKCYMILFYPERNTPAYFNSMIQGYTMRRD.

Positions 1–19 (MGPRARTVCFLFFLLWVLA) are cleaved as a signal peptide. Topologically, residues 20-561 (ELAENSDFHL…SFLEWHEAAT (542 aa)) are extracellular. N-linked (GlcNAc...) asparagine glycans are attached at residues N84, N292, N312, N363, N423, N482, and N522. A helical membrane pass occupies residues 562–582 (IAVALLAALGFLXXXXXXXXX). Residues 583–597 (XXXXXXPMVRSAGGP) are Cytoplasmic-facing. The chain crosses the membrane as a helical span at residues 598 to 618 (MCFLMLTLLLVAYMVVPVYVG). Residues 619–630 (PPKVTTCLCRQA) are Extracellular-facing. The helical transmembrane segment at 631–651 (LFPVCFTICISCITMRSFQIV) threads the bilayer. Topologically, residues 652–676 (CVFKMASRFPRAYSYWVRYQGSYVS) are cytoplasmic. A helical membrane pass occupies residues 677 to 697 (VAFITALKVVTVVISLLATGL). Over 698–722 (NPTTRADTDDPKIMIISCNPNYRNS) the chain is Extracellular. The helical transmembrane segment at 723–743 (LLFNTSLDLLLSVVGFSFAYM) threads the bilayer. Over 744-755 (GKELPTNYNEAK) the chain is Cytoplasmic. The helical transmembrane segment at 756–776 (FITFSMTFYFTSSVSLCTFMS) threads the bilayer. At 777–779 (VYD) the chain is on the extracellular side. The chain crosses the membrane as a helical span at residues 780 to 800 (GVLVTIVDLLVTVFNLLAISL). Residues 801–834 (GYFGPKCYMILFYPERNTPAYFNSMIQGYTMRRD) are Cytoplasmic-facing.

Belongs to the G-protein coupled receptor 3 family. TAS1R subfamily. Forms heterodimers with TAS1R3.

It localises to the cell membrane. Putative taste receptor. TAS1R2/TAS1R3 recognizes diverse natural and synthetic sweeteners. The polypeptide is Taste receptor type 1 member 2 (TAS1R2) (Cebuella pygmaea (Pygmy marmoset)).